We begin with the raw amino-acid sequence, 88 residues long: Large ribosomal subunit protein bL27 (88 aa).

A disordered region spans residues 1–21 (MAHKKGASSSRNGRDSAAQRL).

Belongs to the bacterial ribosomal protein bL27 family.

This Mycobacterium sp. (strain MCS) protein is Large ribosomal subunit protein bL27.